An 81-amino-acid polypeptide reads, in one-letter code: Small ribosomal subunit protein bS16 (81 aa).

It belongs to the bacterial ribosomal protein bS16 family.

The chain is Small ribosomal subunit protein bS16 from Agathobacter rectalis (strain ATCC 33656 / DSM 3377 / JCM 17463 / KCTC 5835 / VPI 0990) (Eubacterium rectale).